A 123-amino-acid chain; its full sequence is D-ribose pyranase (123 aa).

Histidine 20 functions as the Proton donor in the catalytic mechanism. Residues aspartate 28, histidine 90, and 112-114 (YAN) each bind substrate.

This sequence belongs to the RbsD / FucU family. RbsD subfamily. In terms of assembly, homodecamer.

It is found in the cytoplasm. The catalysed reaction is beta-D-ribopyranose = beta-D-ribofuranose. The protein operates within carbohydrate metabolism; D-ribose degradation; D-ribose 5-phosphate from beta-D-ribopyranose: step 1/2. In terms of biological role, catalyzes the interconversion of beta-pyran and beta-furan forms of D-ribose. The chain is D-ribose pyranase from Corynebacterium glutamicum (strain R).